Reading from the N-terminus, the 205-residue chain is Thymidylate kinase (205 aa).

Position 10–17 (10–17 (GTEGVGKS)) interacts with ATP.

It belongs to the thymidylate kinase family.

It carries out the reaction dTMP + ATP = dTDP + ADP. In terms of biological role, phosphorylation of dTMP to form dTDP in both de novo and salvage pathways of dTTP synthesis. In Teredinibacter turnerae (strain ATCC 39867 / T7901), this protein is Thymidylate kinase.